The primary structure comprises 305 residues: UDP-3-O-acyl-N-acetylglucosamine deacetylase (305 aa).

Zn(2+) contacts are provided by histidine 79, histidine 238, and aspartate 242. Histidine 265 (proton donor) is an active-site residue.

This sequence belongs to the LpxC family. Zn(2+) serves as cofactor.

The enzyme catalyses a UDP-3-O-[(3R)-3-hydroxyacyl]-N-acetyl-alpha-D-glucosamine + H2O = a UDP-3-O-[(3R)-3-hydroxyacyl]-alpha-D-glucosamine + acetate. The protein operates within glycolipid biosynthesis; lipid IV(A) biosynthesis; lipid IV(A) from (3R)-3-hydroxytetradecanoyl-[acyl-carrier-protein] and UDP-N-acetyl-alpha-D-glucosamine: step 2/6. In terms of biological role, catalyzes the hydrolysis of UDP-3-O-myristoyl-N-acetylglucosamine to form UDP-3-O-myristoylglucosamine and acetate, the committed step in lipid A biosynthesis. In Klebsiella pneumoniae (strain 342), this protein is UDP-3-O-acyl-N-acetylglucosamine deacetylase.